The sequence spans 353 residues: Photosystem II D2 protein (353 aa).

At Thr2 the chain carries N-acetylthreonine. Thr2 is modified (phosphothreonine). The chain crosses the membrane as a helical span at residues 41–61 (CAYFALGGWLTGTTFVTSWYT). His118 contacts chlorophyll a. A helical transmembrane segment spans residues 125–141 (GFMLRQFELARSVQLRP). The pheophytin a site is built by Gln130 and Asn143. A helical membrane pass occupies residues 153-166 (VFVSVFLIYPLGQS). Residue His198 participates in chlorophyll a binding. Residues 208-228 (AALLCAIHGATVENTLFEDGD) traverse the membrane as a helical segment. His215 and Phe262 together coordinate a plastoquinone. His215 provides a ligand contact to Fe cation. Position 269 (His269) interacts with Fe cation. The chain crosses the membrane as a helical span at residues 279 to 295 (GLWMSAIGVVGLALNLR).

It belongs to the reaction center PufL/M/PsbA/D family. As to quaternary structure, PSII is composed of 1 copy each of membrane proteins PsbA, PsbB, PsbC, PsbD, PsbE, PsbF, PsbH, PsbI, PsbJ, PsbK, PsbL, PsbM, PsbT, PsbX, PsbY, PsbZ, Psb30/Ycf12, at least 3 peripheral proteins of the oxygen-evolving complex and a large number of cofactors. It forms dimeric complexes. The D1/D2 heterodimer binds P680, chlorophylls that are the primary electron donor of PSII, and subsequent electron acceptors. It shares a non-heme iron and each subunit binds pheophytin, quinone, additional chlorophylls, carotenoids and lipids. There is also a Cl(-1) ion associated with D1 and D2, which is required for oxygen evolution. The PSII complex binds additional chlorophylls, carotenoids and specific lipids. is required as a cofactor.

It localises to the plastid. The protein resides in the chloroplast thylakoid membrane. The enzyme catalyses 2 a plastoquinone + 4 hnu + 2 H2O = 2 a plastoquinol + O2. Its function is as follows. Photosystem II (PSII) is a light-driven water:plastoquinone oxidoreductase that uses light energy to abstract electrons from H(2)O, generating O(2) and a proton gradient subsequently used for ATP formation. It consists of a core antenna complex that captures photons, and an electron transfer chain that converts photonic excitation into a charge separation. The D1/D2 (PsbA/PsbD) reaction center heterodimer binds P680, the primary electron donor of PSII as well as several subsequent electron acceptors. D2 is needed for assembly of a stable PSII complex. In Zygnema circumcarinatum (Green alga), this protein is Photosystem II D2 protein.